A 275-amino-acid polypeptide reads, in one-letter code: MSLILAVYGKGGIGKSTTTANISAALALQGAKVLQIGCDPKHDSTFPLTGTLQKTVIEALDEVDFHHEELEKEDIIETGFAGIDALEAGGPPAGSGCGGYVVGEAVKLLQELGLYDQYDVILFDVLGDVVCGGFSAPLNYADYAVIIATNDFDSIFAANRLCMAIQQKSVRYKVKLAGIVANRVDYVKGGGTNMLEQFSEKVGTKLLARVPYHELIRKSRFAGKTMFQMEDGPEKDECLKPYNEIAEFLLSENPSASVPVPIGDRDIFEIVGGWQ.

ATP-binding positions include 12-17 (GIGKST) and Lys-41. Residue Ser-16 participates in Mg(2+) binding. Cys-97 and Cys-131 together coordinate [4Fe-4S] cluster. 182–183 (NR) lines the ATP pocket.

Belongs to the NifH/BchL/ChlL family. As to quaternary structure, homodimer. Protochlorophyllide reductase is composed of three subunits; BchL, BchN and BchB. [4Fe-4S] cluster is required as a cofactor.

It catalyses the reaction chlorophyllide a + oxidized 2[4Fe-4S]-[ferredoxin] + 2 ADP + 2 phosphate = protochlorophyllide a + reduced 2[4Fe-4S]-[ferredoxin] + 2 ATP + 2 H2O. It functions in the pathway porphyrin-containing compound metabolism; bacteriochlorophyll biosynthesis (light-independent). Component of the dark-operative protochlorophyllide reductase (DPOR) that uses Mg-ATP and reduced ferredoxin to reduce ring D of protochlorophyllide (Pchlide) to form chlorophyllide a (Chlide). This reaction is light-independent. The L component serves as a unique electron donor to the NB-component of the complex, and binds Mg-ATP. The chain is Light-independent protochlorophyllide reductase iron-sulfur ATP-binding protein from Prosthecochloris aestuarii (strain DSM 271 / SK 413).